Reading from the N-terminus, the 328-residue chain is MSGAESYRHITVLLNEAVDALAVREDGVYVDGTFGRGGHSRLILSRLGDAGRLIVFDKDPQAIAVAEELARSDKRVGVVHGGFASFQTALDGLGIGKVDGALFDLGISSPQIDDGSRGFSFRFDAPLDMRMDTTRGMSAAEWIAVASEQDLHEVIKNYGEERFSRRIARAIVAQRAESPIDTTRKLAQIVAQNVRTRERGQDPATRTFQAVRIFINRELEEVGAVLPQVMCRLKEGGRLAVIAFHSLEDRIVKQFVKKYSQHAPLPRWAAVREADLPELPLKIVGRALKPGEAEIAANPRARSAVLRVAERTAGPIPEQSQRKTSEWQ.

S-adenosyl-L-methionine is bound by residues 37 to 39, aspartate 57, phenylalanine 83, aspartate 104, and glutamine 111; that span reads GGH.

Belongs to the methyltransferase superfamily. RsmH family.

The protein resides in the cytoplasm. The catalysed reaction is cytidine(1402) in 16S rRNA + S-adenosyl-L-methionine = N(4)-methylcytidine(1402) in 16S rRNA + S-adenosyl-L-homocysteine + H(+). In terms of biological role, specifically methylates the N4 position of cytidine in position 1402 (C1402) of 16S rRNA. The polypeptide is Ribosomal RNA small subunit methyltransferase H (Neisseria meningitidis serogroup B (strain ATCC BAA-335 / MC58)).